Here is a 173-residue protein sequence, read N- to C-terminus: Disulfide bond formation protein B (173 aa).

Residues 1–11 are Cytoplasmic-facing; sequence MNALQWSFRAQ. Residues 12-28 form a helical membrane-spanning segment; sequence CLTGFLFCTGLLAYAIF. Over 29 to 46 the chain is Periplasmic; it reads LQLHQGLEPCPLCIFQRI. An intrachain disulfide couples Cys38 to Cys41. Residues 47–63 traverse the membrane as a helical segment; sequence AFAVLGILFLIAGLYNS. Topologically, residues 64–70 are cytoplasmic; that stretch reads SNVYTRK. The chain crosses the membrane as a helical span at residues 71-88; sequence AYGLLIFLTAIIGTGIAG. Over 89 to 145 the chain is Periplasmic; it reads RHVWVQLMPHNTISSCGSPLSFLSETMGPFEVFRTVLTGTSNCGNIDWRFLGLSMPM. Cys104 and Cys131 form a disulfide bridge. The chain crosses the membrane as a helical span at residues 146–164; it reads WSMFWFVALALLGLLVGFK. Topologically, residues 165-173 are cytoplasmic; sequence AERRKPLFS.

Belongs to the DsbB family.

It is found in the cell inner membrane. In terms of biological role, required for disulfide bond formation in some periplasmic proteins. Acts by oxidizing the DsbA protein. This is Disulfide bond formation protein B from Xylella fastidiosa (strain Temecula1 / ATCC 700964).